Reading from the N-terminus, the 445-residue chain is MSEMTQTAEEQPIDELVGWVKQHDFSLNLPPERLAFLIAIAVLSNERFDEELGEGELHDAFTIVTRLFEDTGEASAFRANNAINELVKQKLISRFTSEITDGASIYRLSPLAIGISDYYLRHRQFSKLKLSIQLSMVADEMAKAIEAAQKGGTPGHWRRNVYGVLKYSVGEIFDQIDLNQRVMDEQQQTVKQQIADLLNKDWREAINNCESLLSETSATLKELQDTLQAAGDELQTQILDIQEIVYGDDELEFVGETLFGLQMKLDRITSWGQQAIDLWIGYDRHVHKFIRTAIDMDKNRAFSQRLRQSVTDYFDAPWLLTYADAEKLTDLRDEALVLRDDEVMGQAPIDVEYEEFEQVNDLLSERIGDMLKAHKQQGAPIDLGLVLRDYLAAHPRTHHFDLARIVVDQAVRLGYSESDYQAIQPDWQAINDFGAKVQANVINKY.

Positions 213–241 (LSETSATLKELQDTLQAAGDELQTQILDI) are leucine-zipper.

It belongs to the MukF family. Interacts, and probably forms a ternary complex, with MukE and MukB via its C-terminal region. The complex formation is stimulated by calcium or magnesium. It is required for an interaction between MukE and MukB.

Its subcellular location is the cytoplasm. It is found in the nucleoid. Its function is as follows. Involved in chromosome condensation, segregation and cell cycle progression. May participate in facilitating chromosome segregation by condensation DNA from both sides of a centrally located replisome during cell division. Not required for mini-F plasmid partitioning. Probably acts via its interaction with MukB and MukE. Overexpression results in anucleate cells. It has a calcium binding activity. In Vibrio atlanticus (strain LGP32) (Vibrio splendidus (strain Mel32)), this protein is Chromosome partition protein MukF.